Consider the following 393-residue polypeptide: uncharacterized protein (393 aa).

Disordered stretches follow at residues 77-118 (DSNN…SIRP) and 259-296 (INNNNNNNNNNSNNNNNNNNSNNNDNNNNINTKVDESN). A compositionally biased stretch (low complexity) spans 79-92 (NNNNNNNNNNNNNN). The segment covering 103–114 (IRQSLSSPQQLV) has biased composition (polar residues). Positions 259–289 (INNNNNNNNNNSNNNNNNNNSNNNDNNNNIN) are enriched in low complexity.

This is an uncharacterized protein from Dictyostelium discoideum (Social amoeba).